The primary structure comprises 269 residues: 4-hydroxy-tetrahydrodipicolinate reductase (269 aa).

11–16 (GPIGRM) contacts NAD(+). K39 contacts NADP(+). NAD(+) is bound by residues 101-103 (GTT) and 125-128 (ASNF). The Proton donor/acceptor role is filled by H158. H159 is a binding site for (S)-2,3,4,5-tetrahydrodipicolinate. The active-site Proton donor is K162. 168–169 (GT) is a binding site for (S)-2,3,4,5-tetrahydrodipicolinate.

Belongs to the DapB family. In terms of assembly, homotetramer.

Its subcellular location is the cytoplasm. The enzyme catalyses (S)-2,3,4,5-tetrahydrodipicolinate + NAD(+) + H2O = (2S,4S)-4-hydroxy-2,3,4,5-tetrahydrodipicolinate + NADH + H(+). The catalysed reaction is (S)-2,3,4,5-tetrahydrodipicolinate + NADP(+) + H2O = (2S,4S)-4-hydroxy-2,3,4,5-tetrahydrodipicolinate + NADPH + H(+). It functions in the pathway amino-acid biosynthesis; L-lysine biosynthesis via DAP pathway; (S)-tetrahydrodipicolinate from L-aspartate: step 4/4. In terms of biological role, catalyzes the conversion of 4-hydroxy-tetrahydrodipicolinate (HTPA) to tetrahydrodipicolinate. The polypeptide is 4-hydroxy-tetrahydrodipicolinate reductase (Buchnera aphidicola subsp. Acyrthosiphon pisum (strain 5A)).